The primary structure comprises 200 residues: Crossover junction endodeoxyribonuclease RuvC (200 aa).

Catalysis depends on residues Asp18, Glu78, and Asp151. Residues Asp18, Glu78, and Asp151 each coordinate Mg(2+).

It belongs to the RuvC family. As to quaternary structure, homodimer which binds Holliday junction (HJ) DNA. The HJ becomes 2-fold symmetrical on binding to RuvC with unstacked arms; it has a different conformation from HJ DNA in complex with RuvA. In the full resolvosome a probable DNA-RuvA(4)-RuvB(12)-RuvC(2) complex forms which resolves the HJ. Mg(2+) serves as cofactor.

It localises to the cytoplasm. It carries out the reaction Endonucleolytic cleavage at a junction such as a reciprocal single-stranded crossover between two homologous DNA duplexes (Holliday junction).. Its function is as follows. The RuvA-RuvB-RuvC complex processes Holliday junction (HJ) DNA during genetic recombination and DNA repair. Endonuclease that resolves HJ intermediates. Cleaves cruciform DNA by making single-stranded nicks across the HJ at symmetrical positions within the homologous arms, yielding a 5'-phosphate and a 3'-hydroxyl group; requires a central core of homology in the junction. The consensus cleavage sequence is 5'-(A/T)TT(C/G)-3'. Cleavage occurs on the 3'-side of the TT dinucleotide at the point of strand exchange. HJ branch migration catalyzed by RuvA-RuvB allows RuvC to scan DNA until it finds its consensus sequence, where it cleaves and resolves the cruciform DNA. This Cytophaga hutchinsonii (strain ATCC 33406 / DSM 1761 / CIP 103989 / NBRC 15051 / NCIMB 9469 / D465) protein is Crossover junction endodeoxyribonuclease RuvC.